The chain runs to 317 residues: Protease 7 (317 aa).

Positions 1–20 are cleaved as a signal peptide; it reads MRAKLLGIVLTTPIAISSFA. The Periplasmic portion of the chain corresponds to 21–31; it reads STETLSFTPDN. A beta stranded transmembrane segment spans residues 32-41; the sequence is INADISLGTL. Over 42-69 the chain is Extracellular; that stretch reads SGKTKERVYLAEEGGRKVSQLDWKFNNA. A beta stranded membrane pass occupies residues 70 to 78; sequence AIIKGAINW. At 79 to 83 the chain is on the periplasmic side; sequence DLMPQ. The beta stranded transmembrane segment at 84-92 threads the bilayer; the sequence is ISIGAAGWT. Topologically, residues 93–130 are extracellular; it reads TLGSRGGNMVDQDWMDSSNPGTWTDESRHPDTQLNYAN. Residues aspartate 103 and aspartate 105 contribute to the active site. Residues 131-140 form a beta stranded membrane-spanning segment; sequence EFDLNIKGWL. Over 141–145 the chain is Periplasmic; that stretch reads LNEPN. Residues 146–156 traverse the membrane as a beta stranded segment; sequence YRLGLMAGYQE. At 157 to 197 the chain is on the extracellular side; it reads SRYSFTARGGSYIYSSEEGFRDDIGSFPNGERAIGYKQRFK. The chain crosses the membrane as a beta stranded span at residues 198-209; it reads MPYIGLTGSYRY. At 210–211 the chain is on the periplasmic side; that stretch reads ED. A beta stranded membrane pass occupies residues 212–221; sequence FELGGTFKYS. At 222 to 250 the chain is on the extracellular side; it reads GWVEASDNDEHYDPGKRITYRSKVKDQNY. Residues aspartate 230 and histidine 232 contribute to the active site. Residues 251 to 261 traverse the membrane as a beta stranded segment; that stretch reads YSVSVNAGYYV. At 262-264 the chain is on the periplasmic side; the sequence is TPN. A beta stranded membrane pass occupies residues 265 to 274; it reads AKVYVEGTWN. Residues 275–306 lie on the Extracellular side of the membrane; that stretch reads RVTNKKGNTSLYDHNDNTSDYSKNGAGIENYN. The chain crosses the membrane as a beta stranded span at residues 307 to 316; it reads FITTAGLKYT. Residue phenylalanine 317 is a topological domain, periplasmic.

Belongs to the peptidase A26 family. Homopentamer.

Its subcellular location is the cell outer membrane. It catalyses the reaction Has a virtual requirement for Arg in the P1 position and a slightly less stringent preference for this residue in the P1' position, which can also contain Lys, Gly or Val.. Inhibited by zinc. Protease that can cleave T7 RNA polymerase, ferric enterobactin receptor protein (FEP), antimicrobial peptide protamine and other proteins. This protease has a specificity for paired basic residues. This is Protease 7 (ompT) from Escherichia coli O157:H7.